Consider the following 86-residue polypeptide: Large ribosomal subunit protein bL27 (86 aa).

Residues 1 to 21 form a disordered region; the sequence is MAHKKGGGSSRNGRDSESKRL.

The protein belongs to the bacterial ribosomal protein bL27 family.

This chain is Large ribosomal subunit protein bL27, found in Rubrobacter xylanophilus (strain DSM 9941 / JCM 11954 / NBRC 16129 / PRD-1).